The chain runs to 356 residues: Tyrosine recombinase XerS (356 aa).

Residues 16–121 (IMPWYVLDYY…ALSSLYKYLT (106 aa)) form the Core-binding (CB) domain. One can recognise a Tyr recombinase domain in the interval 169-354 (AFLDYVDKEY…VNDEQKNALD (186 aa)). Residues Arg210, Lys234, His306, Arg309, and His332 contribute to the active site. Tyr341 acts as the O-(3'-phospho-DNA)-tyrosine intermediate in catalysis.

The protein belongs to the 'phage' integrase family. XerS subfamily.

It localises to the cytoplasm. Its activity is regulated as follows. FtsK is required for recombination. Its function is as follows. Site-specific tyrosine recombinase, which acts by catalyzing the cutting and rejoining of the recombining DNA molecules. Essential to convert dimers of the bacterial chromosome into monomers to permit their segregation at cell division. This Streptococcus pyogenes serotype M5 (strain Manfredo) protein is Tyrosine recombinase XerS.